Reading from the N-terminus, the 860-residue chain is Transforming growth factor-beta receptor-associated protein 1 (860 aa).

Residues 24–297 enclose the CNH domain; that stretch reads HISIECVECC…HILQDFEGRV (274 aa). The CHCR repeat unit spans residues 564-732; sequence RPLDEQQQTS…YLRAGPSAQD (169 aa).

The protein belongs to the TRAP1 family. In terms of assembly, interacts with TGFBR2 and ACVR2B; in the absence of ligand stimulation. Interacts with TGFBR1, ACVRL1, BMPR1A and ACVR1B; in the absence of ligand stimulation and to a less extent. Interacts with SMAD4; the interaction seems to be mutually exclusive with the interaction of SMAD4 and phosphorylated SMAD2. May interact with ALOX5. Interacts with RAB5C. Interacts with VPS8, VPS11 and VPS16. Component of the putative class C core vacuole/endosome tethering (CORVET) complex; the core of which composed of the class C Vps proteins VPS11, VPS16, VPS18 and VPS33A, is associated with VPS8 and TGFBRAP1.

The protein resides in the cytoplasm. Its subcellular location is the early endosome. Plays a role in the TGF-beta/activin signaling pathway. It associates with inactive heteromeric TGF-beta and activin receptor complexes, mainly through the type II receptor, and is released upon activation of signaling. May recruit SMAD4 to the vicinity of the receptor complex and facilitate its interaction with receptor-regulated Smads, such as SMAD2. In terms of biological role, plays a role in vesicle-mediated protein trafficking of the endocytic membrane transport pathway. Believed to act as a component of the putative CORVET endosomal tethering complexes which is proposed to be involved in the Rab5-to-Rab7 endosome conversion probably implicating MON1A/B, and via binding SNAREs and SNARE complexes to mediate tethering and docking events during SNARE-mediated membrane fusion. The CORVET complex is proposed to function as a Rab5 effector to mediate early endosome fusion probably in specific endosome subpopulations. Functions predominantly in APPL1-containing endosomes and in degradative but not recycling trafficking of endocytosed cargo. The chain is Transforming growth factor-beta receptor-associated protein 1 (Tgfbrap1) from Mus musculus (Mouse).